Here is a 204-residue protein sequence, read N- to C-terminus: Guanylate kinase (204 aa).

The 179-residue stretch at 3–181 folds into the Guanylate kinase-like domain; it reads GTLYIVSASS…AVSEMSAIFT (179 aa). 10 to 17 contributes to the ATP binding site; that stretch reads ASSGTGKS.

The protein belongs to the guanylate kinase family.

It localises to the cytoplasm. The enzyme catalyses GMP + ATP = GDP + ADP. In terms of biological role, essential for recycling GMP and indirectly, cGMP. The sequence is that of Guanylate kinase from Xylella fastidiosa (strain Temecula1 / ATCC 700964).